The following is a 239-amino-acid chain: tRNA (guanine-N(7)-)-methyltransferase (239 aa).

Residues E69, E94, D121, and D144 each contribute to the S-adenosyl-L-methionine site. Residue D144 is part of the active site. A substrate-binding site is contributed by K148. Residues 150-155 (RHNKRR) form an interaction with RNA region. Substrate is bound by residues D180 and 217-220 (TKFE).

It belongs to the class I-like SAM-binding methyltransferase superfamily. TrmB family. In terms of assembly, monomer.

The enzyme catalyses guanosine(46) in tRNA + S-adenosyl-L-methionine = N(7)-methylguanosine(46) in tRNA + S-adenosyl-L-homocysteine. It functions in the pathway tRNA modification; N(7)-methylguanine-tRNA biosynthesis. In terms of biological role, catalyzes the formation of N(7)-methylguanine at position 46 (m7G46) in tRNA. This chain is tRNA (guanine-N(7)-)-methyltransferase, found in Yersinia enterocolitica serotype O:8 / biotype 1B (strain NCTC 13174 / 8081).